Consider the following 328-residue polypeptide: Carbonic anhydrase-related protein 10 (328 aa).

The region spanning 31–301 (GWWAYKEVVQ…LNNRCIRTNI (271 aa)) is the Alpha-carbonic anhydrase domain.

This sequence belongs to the alpha-carbonic anhydrase family.

Does not have a catalytic activity. In Macaca fascicularis (Crab-eating macaque), this protein is Carbonic anhydrase-related protein 10 (CA10).